The following is an 81-amino-acid chain: Sulfur carrier protein TusA (81 aa).

C19 serves as the catalytic Cysteine persulfide intermediate.

Belongs to the sulfur carrier protein TusA family. In terms of assembly, interacts with IscS.

Its subcellular location is the cytoplasm. It functions in the pathway tRNA modification. Sulfur carrier protein involved in sulfur trafficking in the cell. Part of a sulfur-relay system required for 2-thiolation during synthesis of 2-thiouridine of the modified wobble base 5-methylaminomethyl-2-thiouridine (mnm(5)s(2)U) in tRNA. Interacts with IscS and stimulates its cysteine desulfurase activity. Accepts an activated sulfur from IscS, which is then transferred to TusD, and thus determines the direction of sulfur flow from IscS to 2-thiouridine formation. Also appears to be involved in sulfur transfer for the biosynthesis of molybdopterin. The polypeptide is Sulfur carrier protein TusA (Cronobacter sakazakii (strain ATCC BAA-894) (Enterobacter sakazakii)).